The sequence spans 146 residues: Large ribosomal subunit protein uL11 (146 aa).

Belongs to the universal ribosomal protein uL11 family. In terms of assembly, part of the ribosomal stalk of the 50S ribosomal subunit. Interacts with L10 and the large rRNA to form the base of the stalk. L10 forms an elongated spine to which L12 dimers bind in a sequential fashion forming a multimeric L10(L12)X complex. Post-translationally, one or more lysine residues are methylated.

In terms of biological role, forms part of the ribosomal stalk which helps the ribosome interact with GTP-bound translation factors. In Corynebacterium jeikeium (strain K411), this protein is Large ribosomal subunit protein uL11.